Here is a 169-residue protein sequence, read N- to C-terminus: Macro domain-containing protein SCO6450 (169 aa).

The Macro domain occupies methionine 1 to glycine 169.

This sequence belongs to the MacroD-type family.

The protein is Macro domain-containing protein SCO6450 of Streptomyces coelicolor (strain ATCC BAA-471 / A3(2) / M145).